We begin with the raw amino-acid sequence, 94 residues long: Small ribosomal subunit protein bS6 (94 aa).

It belongs to the bacterial ribosomal protein bS6 family.

Functionally, binds together with bS18 to 16S ribosomal RNA. This chain is Small ribosomal subunit protein bS6, found in Phytoplasma mali (strain AT).